We begin with the raw amino-acid sequence, 542 residues long: MFS thioclapurine efflux transporter tcpA (542 aa).

A compositionally biased stretch (basic and acidic residues) spans 1 to 10 (MATVGTEEKN). A disordered region spans residues 1-24 (MATVGTEEKNPIGSASNTAEPNVT). The span at 13–24 (GSASNTAEPNVT) shows a compositional bias: polar residues. An N-linked (GlcNAc...) asparagine glycan is attached at asparagine 22. The next 3 membrane-spanning stretches (helical) occupy residues 32-52 (SGFK…LCGL), 75-97 (GWYT…KLYT), and 103-123 (MILL…AAAP). Asparagine 124 carries an N-linked (GlcNAc...) asparagine glycan. 6 helical membrane passes run 133-153 (AIAG…LVHA), 161-181 (ALLG…PFIG), 193-213 (CFII…FFVF), 234-254 (IPEI…LQWG), 265-285 (IIAL…LQVL), and 307-327 (IFAL…PIYF). A glycan (N-linked (GlcNAc...) asparagine) is linked at asparagine 332. A helical membrane pass occupies residues 339–359 (GVNVMPLILGFLVMSIISGVI). A glycan (N-linked (GlcNAc...) asparagine) is linked at asparagine 361. 4 helical membrane-spanning segments follow: residues 370 to 390 (MFLC…FDVG), 396 to 416 (WIGY…QPIV), 427 to 447 (VPFG…IFVA), and 500 to 520 (VLGQ…LGSL).

It belongs to the major facilitator superfamily.

Its subcellular location is the cell membrane. MFS efflux transporter probably involved in thioclapurine export. The protein is MFS thioclapurine efflux transporter tcpA of Claviceps purpurea (strain 20.1) (Ergot fungus).